Here is a 149-residue protein sequence, read N- to C-terminus: Oligosaccharyltransferase complex subunit ostc-B (149 aa).

Topologically, residues 1–32 (MESLYRIPFTVLECPNLKLKKPSWLHMPSAMT) are cytoplasmic. A helical transmembrane segment spans residues 33-53 (VYAMVVVSYFLITGGIIYDVI). The Extracellular portion of the chain corresponds to 54–83 (VEPPSVGSMTDEHGHQRPVAFLAYRVNGQY). Residues 84–104 (IMEGLASSFLFTMGGLGFIIL) form a helical membrane-spanning segment. The Cytoplasmic portion of the chain corresponds to 105–117 (DRSNAPNIPKLNR). Residues 118–138 (FLLLFIGFVCVLLSFFMARVF) traverse the membrane as a helical segment. At 139–149 (MRMKLPGYLMG) the chain is on the extracellular side.

Belongs to the OSTC family. In terms of assembly, specific component of the STT3A-containing form of the oligosaccharyltransferase (OST) complex.

It is found in the membrane. The protein operates within protein modification; protein glycosylation. In terms of biological role, specific component of the STT3A-containing form of the oligosaccharyl transferase (OST) complex that catalyzes the initial transfer of a defined glycan (Glc(3)Man(9)GlcNAc(2) in eukaryotes) from the lipid carrier dolichol-pyrophosphate to an asparagine residue within an Asn-X-Ser/Thr consensus motif in nascent polypeptide chains, the first step in protein N-glycosylation. N-glycosylation occurs cotranslationally and the complex associates with the Sec61 complex at the channel-forming translocon complex that mediates protein translocation across the endoplasmic reticulum (ER). All subunits are required for a maximal enzyme activity. This chain is Oligosaccharyltransferase complex subunit ostc-B, found in Xenopus laevis (African clawed frog).